We begin with the raw amino-acid sequence, 386 residues long: Phosphoglycerate kinase (386 aa).

Residues 21-23 (DLN), Arg-36, 59-62 (HLGR), Arg-112, and Arg-145 each bind substrate. Residues Lys-196, Glu-313, and 339–342 (GGDT) each bind ATP.

It belongs to the phosphoglycerate kinase family. As to quaternary structure, monomer.

Its subcellular location is the cytoplasm. The enzyme catalyses (2R)-3-phosphoglycerate + ATP = (2R)-3-phospho-glyceroyl phosphate + ADP. Its pathway is carbohydrate degradation; glycolysis; pyruvate from D-glyceraldehyde 3-phosphate: step 2/5. This is Phosphoglycerate kinase from Haemophilus influenzae (strain 86-028NP).